We begin with the raw amino-acid sequence, 606 residues long: Pyruvate decarboxylase 2 (606 aa).

Substrate-binding residues include aspartate 68 and histidine 155. A thiamine pyrophosphate binding region spans residues 433 to 515; that stretch reads DSWFNCQKLK…FLINNGGYTI (83 aa). The Mg(2+) site is built by aspartate 483, asparagine 510, and glycine 512. Position 516 (glutamate 516) interacts with substrate.

It belongs to the TPP enzyme family. As to quaternary structure, homotetramer. A metal cation serves as cofactor. Thiamine diphosphate is required as a cofactor.

The enzyme catalyses a 2-oxocarboxylate + H(+) = an aldehyde + CO2. The sequence is that of Pyruvate decarboxylase 2 (PDC2) from Oryza sativa subsp. indica (Rice).